An 800-amino-acid chain; its full sequence is Calmodulin-sensitive adenylate cyclase (800 aa).

An N-terminal signal peptide occupies residues 1–33 (MTRNKFIPNKFSIISFSVLLFAISSSQAIEVNA). The ATLF-like domain maps to 60–273 (KDSINNLVKT…MFEYMNKLEK (214 aa)). The tract at residues 294 to 349 (DVLKGEKALKASGLVPEHADAFKKIARELNTYILFRPVNKLATNLIKSGVATKGLN) is catalytic CA1. Positions 350 to 489 (VHGKSSDWGP…NVEGVLKPLT (140 aa)) are catalytic CB. His-351 acts as the Proton acceptor in catalysis. Residues 490–622 (ADYDLFALAP…RFIEKNITGK (133 aa)) form a catalytic CA2 region. Mg(2+) contacts are provided by Asp-491 and Asp-493. 3',5'-cyclic AMP-binding positions include Thr-548 and 577–579 (HGT). His-577 is a binding site for Mg(2+). The segment at 623–800 (DYLYYFNRSY…EVFQKIIDEK (178 aa)) is interaction with calmodulin.

It belongs to the adenylyl cyclase class-2 family. As to quaternary structure, interacts (via ATLF domain) with the cleaved form of protective antigen (PA-63) anthrax toxin; interaction is required for EF translocation into the host cytoplasm. Ca(2+) is required as a cofactor.

It localises to the secreted. The protein resides in the host cytoplasm. The protein localises to the host cytosol. The enzyme catalyses ATP = 3',5'-cyclic AMP + diphosphate. Its activity is regulated as follows. Host calmodulin is an absolute requirement for its activation. Inhibited by ethyl 5-aminopyrazolo[1,5-a]quinazoline-3-carboxylate. Its function is as follows. Edema factor (EF), which constitutes one of the three proteins composing the anthrax toxin, causes edema in the host. Acts as a calmodulin-dependent adenylyl cyclase by converting ATP to cAMP, leading to dramatic elevation of intracellular cAMP levels in the host, thereby causing edema. EF is not toxic by itself and only acts as an edema factor when associated with protective antigen (PA) to form the edema toxin (EdTx). Required for the survival of germinated spores within macrophages at the early stages of infection. In Bacillus anthracis, this protein is Calmodulin-sensitive adenylate cyclase (cya).